A 722-amino-acid polypeptide reads, in one-letter code: A-type ATP synthase subunit I (722 aa).

Positions 309-321 are enriched in basic and acidic residues; that stretch reads DYKPTGHDQHVPA. The segment at 309–352 is disordered; sequence DYKPTGHDQHVPADDGADAATDGGTTASFDETDSPPVIQDNPGP. Residues 326 to 335 show a composition bias toward low complexity; it reads DAATDGGTTA. Transmembrane regions (helical) follow at residues 384 to 404, 419 to 439, 474 to 494, 505 to 525, 554 to 574, 590 to 610, 639 to 659, and 662 to 682; these read FYGF…LGFW, GVAM…GEVF, LAAS…FGFV, AALE…WLFS, LAAA…AGFL, IAAV…LVFG, FMLF…MHMG, and GILI…ALGV.

This sequence belongs to the V-ATPase 116 kDa subunit family. Has multiple subunits with at least A(3), B(3), C, D, E, F, H, I and proteolipid K(x).

It localises to the cell membrane. Component of the A-type ATP synthase that produces ATP from ADP in the presence of a proton gradient across the membrane. This is A-type ATP synthase subunit I from Halobacterium salinarum (strain ATCC 700922 / JCM 11081 / NRC-1) (Halobacterium halobium).